The following is a 464-amino-acid chain: Soluble pyridine nucleotide transhydrogenase (464 aa).

35 to 44 serves as a coordination point for FAD; the sequence is DSRRQVGGNC.

Belongs to the class-I pyridine nucleotide-disulfide oxidoreductase family. FAD serves as cofactor.

Its subcellular location is the cytoplasm. The enzyme catalyses NAD(+) + NADPH = NADH + NADP(+). Its function is as follows. Conversion of NADPH, generated by peripheral catabolic pathways, to NADH, which can enter the respiratory chain for energy generation. The protein is Soluble pyridine nucleotide transhydrogenase of Pseudomonas fluorescens (strain ATCC BAA-477 / NRRL B-23932 / Pf-5).